A 293-amino-acid polypeptide reads, in one-letter code: ATP synthase gamma chain (293 aa).

Belongs to the ATPase gamma chain family. In terms of assembly, F-type ATPases have 2 components, CF(1) - the catalytic core - and CF(0) - the membrane proton channel. CF(1) has five subunits: alpha(3), beta(3), gamma(1), delta(1), epsilon(1). CF(0) has three main subunits: a, b and c.

The protein localises to the cell inner membrane. Its function is as follows. Produces ATP from ADP in the presence of a proton gradient across the membrane. The gamma chain is believed to be important in regulating ATPase activity and the flow of protons through the CF(0) complex. The sequence is that of ATP synthase gamma chain from Psychrobacter sp. (strain PRwf-1).